The primary structure comprises 435 residues: S-phase entry cyclin-5 (435 aa).

2 disordered regions span residues 36–70 (KRAL…NPLS) and 104–126 (NDRT…DAAS). The span at 41–52 (KNDSSSKQQVQD) shows a compositional bias: low complexity. The span at 110 to 124 (EQEEEEEEEGEDDDA) shows a compositional bias: acidic residues.

The protein belongs to the cyclin family. Cyclin AB subfamily.

In terms of biological role, required for efficient progression through S phase and possibly for the normal progression through meiosis. Interacts with CDC28. The polypeptide is S-phase entry cyclin-5 (CLB5) (Saccharomyces cerevisiae (strain ATCC 204508 / S288c) (Baker's yeast)).